A 205-amino-acid polypeptide reads, in one-letter code: Large ribosomal subunit protein uL4 (205 aa).

The interval 43 to 95 is disordered; it reads RSGNRAQKDRAEVKHSTKKPWRQKGTGRARAGMTSSPLWRGGGRAFPNSPEEN. Positions 48–57 are enriched in basic and acidic residues; it reads AQKDRAEVKH. The segment covering 58–69 has biased composition (basic residues); it reads STKKPWRQKGTG.

This sequence belongs to the universal ribosomal protein uL4 family. Part of the 50S ribosomal subunit.

Its function is as follows. One of the primary rRNA binding proteins, this protein initially binds near the 5'-end of the 23S rRNA. It is important during the early stages of 50S assembly. It makes multiple contacts with different domains of the 23S rRNA in the assembled 50S subunit and ribosome. Functionally, forms part of the polypeptide exit tunnel. In Bordetella bronchiseptica (strain ATCC BAA-588 / NCTC 13252 / RB50) (Alcaligenes bronchisepticus), this protein is Large ribosomal subunit protein uL4.